A 520-amino-acid polypeptide reads, in one-letter code: Erythritol kinase (520 aa).

It belongs to the FGGY kinase family.

It catalyses the reaction erythritol + ATP = D-erythritol 1-phosphate + ADP + H(+). It participates in carbohydrate metabolism; erythritol degradation. Its function is as follows. Catalyzes the phosphorylation of erythritol to D-erythritol-1-phosphate. This chain is Erythritol kinase, found in Brucella abortus (strain 2308).